The following is a 1029-amino-acid chain: Protein SUPPRESSOR OF PHYA-105 1 (1029 aa).

Positions 42–69 (SETANSDCPGSSAHRNVDLTKPPPPEEA) are disordered. Residues 188-529 (VQMKTPVSSS…ARDILKSELI (342 aa)) enclose the Protein kinase domain. Residues 194-202 (VSSSNFSQL) and lysine 216 contribute to the ATP site. The segment at 213 to 269 (VVGKNQETPPEFVSDQDLGSKEKKLDISKSPTPHDVLPLKSSPKGNGMVSHGDGNHS) is disordered. Residues 230–239 (LGSKEKKLDI) are compositionally biased toward basic and acidic residues. Aspartate 316 functions as the Proton acceptor in the catalytic mechanism. The tract at residues 347–392 (EDLNRRRPVVEESSSGGRDSKKRKMDLHLNSPGNQLQATSTGRPFK) is disordered. A compositionally biased stretch (polar residues) spans 377 to 388 (SPGNQLQATSTG). Residues 557-589 (VQKKKKASKLLQDIQTLEDDIKEAERRYSSNVS) are a coiled coil. Positions 653–679 (ARSDKTLKDRDRCSENQNENQDMSTKG) are disordered. Positions 654-666 (RSDKTLKDRDRCS) are enriched in basic and acidic residues. Positions 667 to 679 (ENQNENQDMSTKG) are enriched in polar residues. WD repeat units follow at residues 714–753 (NSAS…NESV), 763–803 (VNKS…GFSQ), 806–846 (EHQK…SLGT), 848–888 (WSPA…TPWC), 892–930 (GHEK…SSGL), 932–971 (PGAC…YSYY), and 997–1029 (DNGQ…LKLV). Positions 866-881 (LAFGSADYKVYCYDLR) match the DWD box motif.

Interacts with CO, COP1, HFR1, HY5 and PHYA. Light induces dissociation of the SPA1/COP1 complex. Binds to CRY1 in response to blue light, this interaction prevents SPA1/COP1 complex formation but stimulate CRY2/COP1 complex, and thus avoid COP1-dependent degradation of the transcription factor HY5 by the proteasome and promotes hypocotyl elongation.

It is found in the nucleus speckle. It localises to the nucleus. The protein localises to the PML body. Functionally, controls normal photoperiodic flowering and regulates circadian rhythms. Required for suppression of photomorphogenesis in dark-grown seedlings and for normal elongation growth of adult plants. Integral component of the COP1/SPA E3 ubiquitin-protein ligase complex. Involved in HY5, HFR1, LAF1 and CO degradation. In Arabidopsis thaliana (Mouse-ear cress), this protein is Protein SUPPRESSOR OF PHYA-105 1 (SPA1).